A 371-amino-acid chain; its full sequence is Probable palmitoyltransferase ZDHHC11B (371 aa).

2 helical membrane-spanning segments follow: residues 43-63 and 70-90; these read VVTW…FIPL and YIAY…HLIA. One can recognise a DHHC domain in the interval 125-175; the sequence is QFCHLCKVTVNKKTKHCISCNKCVSGFDHHCKWINNCVGSRNYWFFFSTVA. Residue cysteine 155 is the S-palmitoyl cysteine intermediate of the active site. 3 helical membrane-spanning segments follow: residues 177 to 197, 216 to 236, and 239 to 259; these read ATAG…QYLV, TWLL…VVII, and LVLL…IFHI. A disordered region spans residues 335–371; that stretch reads DGDSKAQEADDAPSTSTLGLQQETTEPMKTDSAESED. A compositionally biased stretch (polar residues) spans 347–359; that stretch reads PSTSTLGLQQETT. Over residues 360-371 the composition is skewed to basic and acidic residues; that stretch reads EPMKTDSAESED.

Belongs to the DHHC palmitoyltransferase family.

The protein localises to the membrane. It carries out the reaction L-cysteinyl-[protein] + hexadecanoyl-CoA = S-hexadecanoyl-L-cysteinyl-[protein] + CoA. In terms of biological role, probable palmitoyltransferase that could catalyze the addition of palmitate onto various protein substrates and be involved in a variety of cellular processes. May play a role in cell proliferation. This is Probable palmitoyltransferase ZDHHC11B from Homo sapiens (Human).